A 445-amino-acid chain; its full sequence is Methionine aminopeptidase 2-2 (445 aa).

Positions 1–92 are disordered; the sequence is MAAQASEDLK…RVPISQLFPN (92 aa). The segment covering 18–33 has biased composition (low complexity); that stretch reads AGDSKAAAATAGQAEA. A compositionally biased stretch (acidic residues) spans 34 to 46; it reads GEAEDDSDDDEVD. Residues 47-58 are compositionally biased toward low complexity; sequence GNAAPEGAASGA. Over residues 59–74 the composition is skewed to basic residues; it reads AKKKKKRKPKKKKKGG. Histidine 198 lines the substrate pocket. The a divalent metal cation site is built by aspartate 218, aspartate 229, and histidine 298. Histidine 306 serves as a coordination point for substrate. Residues glutamate 331 and glutamate 426 each coordinate a divalent metal cation.

Belongs to the peptidase M24A family. Methionine aminopeptidase eukaryotic type 2 subfamily. It depends on Co(2+) as a cofactor. The cofactor is Zn(2+). Mn(2+) serves as cofactor. Fe(2+) is required as a cofactor.

It localises to the cytoplasm. It catalyses the reaction Release of N-terminal amino acids, preferentially methionine, from peptides and arylamides.. Cotranslationally removes the N-terminal methionine from nascent proteins. The N-terminal methionine is often cleaved when the second residue in the primary sequence is small and uncharged (Met-Ala-, Cys, Gly, Pro, Ser, Thr, or Val). This is Methionine aminopeptidase 2-2 from Aspergillus terreus (strain NIH 2624 / FGSC A1156).